A 248-amino-acid chain; its full sequence is Homeobox protein Hox-A4 (248 aa).

The segment at 23 to 107 is disordered; the sequence is YQQSGYIPNP…PDGGAGANAS (85 aa). Over residues 35–51 the composition is skewed to basic and acidic residues; the sequence is YYERPKDTGFPHHDEPS. The Antp-type hexapeptide signature appears at 128–133; it reads VYPWMK. The segment at residues 149 to 208 is a DNA-binding region (homeobox); it reads PKRSRTAYTRQQALELEKEFHFNRYLTRRRRVEIAHTMCLSERQVKIWFQNRRMKWKKEH. The segment at 207–248 is disordered; it reads EHKLPNTKIRSSSSASSSASGAQQQQIKTGQQLVPTPCTAGL. A compositionally biased stretch (low complexity) spans 217-238; it reads SSSSASSSASGAQQQQIKTGQQ.

The protein belongs to the Antp homeobox family. Deformed subfamily.

It localises to the nucleus. In terms of biological role, sequence-specific transcription factor which is part of a developmental regulatory system that provides cells with specific positional identities on the anterior-posterior axis. The protein is Homeobox protein Hox-A4 (hoxa4) of Morone saxatilis (Striped bass).